The following is a 281-amino-acid chain: ATP phosphoribosyltransferase (281 aa).

It belongs to the ATP phosphoribosyltransferase family. Long subfamily. It depends on Mg(2+) as a cofactor.

It is found in the cytoplasm. It carries out the reaction 1-(5-phospho-beta-D-ribosyl)-ATP + diphosphate = 5-phospho-alpha-D-ribose 1-diphosphate + ATP. It participates in amino-acid biosynthesis; L-histidine biosynthesis; L-histidine from 5-phospho-alpha-D-ribose 1-diphosphate: step 1/9. Feedback inhibited by histidine. Catalyzes the condensation of ATP and 5-phosphoribose 1-diphosphate to form N'-(5'-phosphoribosyl)-ATP (PR-ATP). Has a crucial role in the pathway because the rate of histidine biosynthesis seems to be controlled primarily by regulation of HisG enzymatic activity. This Corynebacterium efficiens (strain DSM 44549 / YS-314 / AJ 12310 / JCM 11189 / NBRC 100395) protein is ATP phosphoribosyltransferase.